We begin with the raw amino-acid sequence, 445 residues long: UPF0210 protein SPJ_0248 (445 aa).

The protein belongs to the UPF0210 family. In terms of assembly, homodimer.

This is UPF0210 protein SPJ_0248 from Streptococcus pneumoniae (strain JJA).